A 321-amino-acid polypeptide reads, in one-letter code: tRNA(Ile)-lysidine synthase (321 aa).

Residue 30–35 (SGGSDS) coordinates ATP.

This sequence belongs to the tRNA(Ile)-lysidine synthase family.

Its subcellular location is the cytoplasm. The enzyme catalyses cytidine(34) in tRNA(Ile2) + L-lysine + ATP = lysidine(34) in tRNA(Ile2) + AMP + diphosphate + H(+). Ligates lysine onto the cytidine present at position 34 of the AUA codon-specific tRNA(Ile) that contains the anticodon CAU, in an ATP-dependent manner. Cytidine is converted to lysidine, thus changing the amino acid specificity of the tRNA from methionine to isoleucine. This Chlamydia trachomatis serovar D (strain ATCC VR-885 / DSM 19411 / UW-3/Cx) protein is tRNA(Ile)-lysidine synthase.